The primary structure comprises 694 residues: Heat shock protein homolog SSE1 (694 aa).

The segment at 671–694 (AQRSADSEAKKDATPEGDAQMDLD) is disordered. Residues 675–684 (ADSEAKKDAT) are compositionally biased toward basic and acidic residues.

Belongs to the heat shock protein 70 family.

The protein resides in the cytoplasm. This is Heat shock protein homolog SSE1 (SSE1) from Candida glabrata (strain ATCC 2001 / BCRC 20586 / JCM 3761 / NBRC 0622 / NRRL Y-65 / CBS 138) (Yeast).